The following is a 460-amino-acid chain: A-type ATP synthase subunit B 1 (460 aa).

The protein belongs to the ATPase alpha/beta chains family. In terms of assembly, has multiple subunits with at least A(3), B(3), C, D, E, F, H, I and proteolipid K(x).

The protein resides in the cell membrane. Its function is as follows. Component of the A-type ATP synthase that produces ATP from ADP in the presence of a proton gradient across the membrane. The B chain is a regulatory subunit. The protein is A-type ATP synthase subunit B 1 of Methanospirillum hungatei JF-1 (strain ATCC 27890 / DSM 864 / NBRC 100397 / JF-1).